The primary structure comprises 231 residues: 7-cyano-7-deazaguanine synthase (231 aa).

8-18 is an ATP binding site; that stretch reads FSGGQDSTTCL. The Zn(2+) site is built by Cys-188, Cys-197, Cys-200, and Cys-203.

The protein belongs to the QueC family. Requires Zn(2+) as cofactor.

It carries out the reaction 7-carboxy-7-deazaguanine + NH4(+) + ATP = 7-cyano-7-deazaguanine + ADP + phosphate + H2O + H(+). Its pathway is purine metabolism; 7-cyano-7-deazaguanine biosynthesis. Catalyzes the ATP-dependent conversion of 7-carboxy-7-deazaguanine (CDG) to 7-cyano-7-deazaguanine (preQ(0)). The protein is 7-cyano-7-deazaguanine synthase of Salmonella newport (strain SL254).